Consider the following 225-residue polypeptide: Lipoarabinomannan carrier protein LprG (225 aa).

The first 21 residues, 1 to 21, serve as a signal peptide directing secretion; sequence MRNRIRLALIPVAVAAIALAG. Cysteine 22 carries N-palmitoyl cysteine lipidation. The S-diacylglycerol cysteine moiety is linked to residue cysteine 22.

It belongs to the LppX/LprAFG lipoprotein family. Post-translationally, modified by Lgt on Cys-22 with an S-linked diacylglyceral, signal peptide is removed by LspA, Cys-22 is further modifed with a fatty acid on its amino group by Lnt yielding a triacylated protein.

It is found in the cell inner membrane. Its function is as follows. Helps membrane protein MAB_2807 (P55) transport triacylglycerides (TAG) across the inner cell membrane into the periplasm and probably ultimately to the outer membrane. Binds TAG in its hydrophobic cavity and transfers it between lipid bilayers. TAG probably regulates lipid metabolism and growth regulation and plays a structural role in the outer membrane. Also binds mannosides, lipoarabinomannan and lipomannan and various glycolipids in the same cavity. This chain is Lipoarabinomannan carrier protein LprG, found in Mycobacteroides abscessus (strain ATCC 19977 / DSM 44196 / CCUG 20993 / CIP 104536 / JCM 13569 / NCTC 13031 / TMC 1543 / L948) (Mycobacterium abscessus).